Reading from the N-terminus, the 422-residue chain is Protein UmuC (422 aa).

One can recognise a UmuC domain in the interval 2-188 (FALCDVNAFY…LPVDDVWGIG (187 aa)).

This sequence belongs to the DNA polymerase type-Y family.

Functionally, involved in UV protection and mutation. Poorly processive, error-prone DNA polymerase involved in translesion repair. Essential for induced (or SOS) mutagenesis. Able to replicate DNA across DNA lesions (thymine photodimers and abasic sites, translesion synthesis) in the presence of activated RecA; efficiency is maximal in the presence of the beta sliding-clamp and clamp-loading complex of DNA polymerase III plus single-stranded binding protein (SSB). RecA and to a lesser extent the beta clamp-complex may target Pol V to replication complexes stalled at DNA template lesions. This chain is Protein UmuC (umuC), found in Escherichia coli (strain K12).